We begin with the raw amino-acid sequence, 319 residues long: 4-hydroxy-3-methylbut-2-enyl diphosphate reductase (319 aa).

Residue Cys-12 participates in [4Fe-4S] cluster binding. 2 residues coordinate (2E)-4-hydroxy-3-methylbut-2-enyl diphosphate: His-41 and His-74. Dimethylallyl diphosphate contacts are provided by His-41 and His-74. Residues His-41 and His-74 each contribute to the isopentenyl diphosphate site. Cys-97 is a [4Fe-4S] cluster binding site. His-125 lines the (2E)-4-hydroxy-3-methylbut-2-enyl diphosphate pocket. Position 125 (His-125) interacts with dimethylallyl diphosphate. Residue His-125 coordinates isopentenyl diphosphate. Glu-127 (proton donor) is an active-site residue. Thr-168 provides a ligand contact to (2E)-4-hydroxy-3-methylbut-2-enyl diphosphate. Position 198 (Cys-198) interacts with [4Fe-4S] cluster. Positions 226, 227, 228, and 270 each coordinate (2E)-4-hydroxy-3-methylbut-2-enyl diphosphate. 4 residues coordinate dimethylallyl diphosphate: Ser-226, Ser-227, Asn-228, and Ser-270. Isopentenyl diphosphate-binding residues include Ser-226, Ser-227, Asn-228, and Ser-270.

This sequence belongs to the IspH family. In terms of assembly, homodimer. The cofactor is [4Fe-4S] cluster.

The catalysed reaction is isopentenyl diphosphate + 2 oxidized [2Fe-2S]-[ferredoxin] + H2O = (2E)-4-hydroxy-3-methylbut-2-enyl diphosphate + 2 reduced [2Fe-2S]-[ferredoxin] + 2 H(+). It carries out the reaction dimethylallyl diphosphate + 2 oxidized [2Fe-2S]-[ferredoxin] + H2O = (2E)-4-hydroxy-3-methylbut-2-enyl diphosphate + 2 reduced [2Fe-2S]-[ferredoxin] + 2 H(+). The protein operates within isoprenoid biosynthesis; dimethylallyl diphosphate biosynthesis; dimethylallyl diphosphate from (2E)-4-hydroxy-3-methylbutenyl diphosphate: step 1/1. It participates in isoprenoid biosynthesis; isopentenyl diphosphate biosynthesis via DXP pathway; isopentenyl diphosphate from 1-deoxy-D-xylulose 5-phosphate: step 6/6. Its function is as follows. Catalyzes the conversion of 1-hydroxy-2-methyl-2-(E)-butenyl 4-diphosphate (HMBPP) into a mixture of isopentenyl diphosphate (IPP) and dimethylallyl diphosphate (DMAPP). Acts in the terminal step of the DOXP/MEP pathway for isoprenoid precursor biosynthesis. The polypeptide is 4-hydroxy-3-methylbut-2-enyl diphosphate reductase (Hamiltonella defensa subsp. Acyrthosiphon pisum (strain 5AT)).